A 474-amino-acid polypeptide reads, in one-letter code: ERO1-like protein alpha (474 aa).

The first 29 residues, 1–29 (MVSGCCRLDMSSYVSVLVLCSLLLWGSNS), serve as a signal peptide directing secretion. 8 cysteine pairs are disulfide-bonded: Cys40-Cys53, Cys42-Cys51, Cys90-Cys398, Cys99-Cys104, Cys99-Cys138, Cys104-Cys109, Cys215-Cys248, and Cys401-Cys404. The FAD site is built by Arg194, Thr196, and Trp207. 4 residues coordinate FAD: Ser259, His262, Arg294, and Arg307. 2 N-linked (GlcNAc...) asparagine glycosylation sites follow: Asn340 and Asn391. The N-linked (GlcNAc...) asparagine glycan is linked to Asn430.

This sequence belongs to the EROs family. As to quaternary structure, predominantly monomer. May function both as a monomer and a homodimer. FAD serves as cofactor. In terms of processing, the Cys-99/Cys-104 and Cys-401/Cys-404 disulfide bonds constitute the redox-active center. The Cys-99/Cys-104 disulfide bond may accept electron from protein disulfide isomerase (PDI) and funnel them to the active site disulfide Cys-401/Cys-404.

It is found in the endoplasmic reticulum membrane. Its activity is regulated as follows. Enzyme activity is tightly regulated to prevent the accumulation of reactive oxygen species in the endoplasmic reticulum. Reversibly down-regulated by the formation of disulfide bonds between the active site Cys-99 and Cys-138, and between Cys-104 and Cys-109. Glutathione may be required to regulate its activity in the endoplasmic reticulum. In terms of biological role, oxidoreductase involved in disulfide bond formation in the endoplasmic reticulum. Efficiently reoxidizes P4HB/PDI, the enzyme catalyzing protein disulfide formation, in order to allow P4HB to sustain additional rounds of disulfide formation. Following P4HB reoxidation, passes its electrons to molecular oxygen via FAD, leading to the production of reactive oxygen species (ROS) in the cell. Required for the folding of immunoglobulins. In Xenopus tropicalis (Western clawed frog), this protein is ERO1-like protein alpha.